Here is a 151-residue protein sequence, read N- to C-terminus: Internal scaffolding protein VP3 (151 aa).

The disordered stretch occupies residues 120–151 (VETPQQAPQSTTNQTTTKPAPASGEPTPVPTP). The span at 122-137 (TPQQAPQSTTNQTTTK) shows a compositional bias: polar residues.

The protein belongs to the microvidae B protein family.

The protein resides in the host cytoplasm. Participates in the assembly of the viral procapsid in the cytoplasm. Internal scaffolding protein VP3 is released from the procapsid upon genome packaging, possibly through affinity displacement by the protein VP8, or by proteolysis. This chain is Internal scaffolding protein VP3, found in Bdellovibrio bacteriovorus (Bacteriophage phiMH2K).